A 651-amino-acid polypeptide reads, in one-letter code: Endo-1,4-beta-xylanase A (651 aa).

The first 30 residues, 1–30 (MKRKVKKMAAMATSIIMAIMIILHSIPVLA), serve as a signal peptide directing secretion. Residues 33–227 (IIYDNETGTH…SSGYANVYKN (195 aa)) form the GH11 domain. Catalysis depends on glutamate 124, which acts as the Nucleophile. The Proton donor role is filled by glutamate 214. CBM6 domains follow at residues 250–370 (SIIE…FIFS), 387–507 (SIIQ…FVFT), and 527–647 (SNIQ…FVFS). Residues glutamate 253 and glutamate 255 each contribute to the Ca(2+) site. Threonine 270 serves as a coordination point for D-xylotriose. Arginine 275 contributes to the Ca(2+) binding site. Copy 1 of the repeat occupies 278–339 (GYIENGNTVT…SSTGSWNTYQ (62 aa)). The 3 X 61 AA approximate repeats stretch occupies residues 278-616 (GYIENGNTVT…GSTGSFDTYR (339 aa)). Residues tyrosine 279, asparagine 336, and asparagine 363 each contribute to the D-xylotriose site. Positions 279, 336, and 363 each coordinate D-xylobiose. Aspartate 365 lines the Ca(2+) pocket. Copy 2 of the repeat occupies 415–476 (GYIENGYSTT…PSTNSWDSYQ (62 aa)). Positions 530, 532, and 552 each coordinate Ca(2+). Repeat 3 spans residues 555–616 (GYIENGYSTT…GSTGSFDTYR (62 aa)). The D-xylotriose site is built by tyrosine 556, aspartate 613, and asparagine 640. Aspartate 642 contacts Ca(2+).

This sequence belongs to the glycosyl hydrolase 11 (cellulase G) family.

It localises to the secreted. It catalyses the reaction Endohydrolysis of (1-&gt;4)-beta-D-xylosidic linkages in xylans.. It participates in glycan degradation; xylan degradation. Functionally, endoxylanase that degrades arabinoxylan and glucuronoxylan to xylobiose and xylotriose (in vitro). This Thermoclostridium stercorarium (Clostridium stercorarium) protein is Endo-1,4-beta-xylanase A (xynA).